A 79-amino-acid polypeptide reads, in one-letter code: RNA-binding protein Hfq (79 aa).

Residues 10-69 form the Sm domain; it reads DPFLNALRKEHVPVSIYLVNGIKLQGNIESFDQYVVLLRNTVTQMVYKHAISTVVPARPV.

The protein belongs to the Hfq family. In terms of assembly, homohexamer.

Functionally, RNA chaperone that binds small regulatory RNA (sRNAs) and mRNAs to facilitate mRNA translational regulation in response to envelope stress, environmental stress and changes in metabolite concentrations. Also binds with high specificity to tRNAs. The protein is RNA-binding protein Hfq of Burkholderia mallei (strain ATCC 23344).